We begin with the raw amino-acid sequence, 235 residues long: Carbonic anhydrase 1 (235 aa).

The Alpha-carbonic anhydrase domain occupies 1 to 235 (GNKQSPVDIK…LKGRTVKASF (235 aa)). His-40 serves as the catalytic Proton donor/acceptor. Zn(2+) is bound by residues His-69, His-71, and His-94. Residues Thr-174 and 174–175 (TH) each bind substrate.

It belongs to the alpha-carbonic anhydrase family. Zn(2+) is required as a cofactor.

The protein localises to the cytoplasm. The enzyme catalyses hydrogencarbonate + H(+) = CO2 + H2O. The catalysed reaction is urea = cyanamide + H2O. With respect to regulation, inhibited by acetazolamide. Its function is as follows. Catalyzes the reversible hydration of carbon dioxide. Can hydrate cyanamide to urea. The sequence is that of Carbonic anhydrase 1 (CA1) from Oryctolagus cuniculus (Rabbit).